We begin with the raw amino-acid sequence, 143 residues long: Large ribosomal subunit protein uL11 (143 aa).

This sequence belongs to the universal ribosomal protein uL11 family. As to quaternary structure, part of the ribosomal stalk of the 50S ribosomal subunit. Interacts with L10 and the large rRNA to form the base of the stalk. L10 forms an elongated spine to which L12 dimers bind in a sequential fashion forming a multimeric L10(L12)X complex. Post-translationally, one or more lysine residues are methylated.

Its function is as follows. Forms part of the ribosomal stalk which helps the ribosome interact with GTP-bound translation factors. The chain is Large ribosomal subunit protein uL11 from Zymomonas mobilis subsp. mobilis (strain ATCC 31821 / ZM4 / CP4).